The sequence spans 384 residues: MAKHLFTSESVSEGHPDKIADQISDAVLDAILQQDPKARVACETYVKTGMVLVGGEITTSAWVDIEEITRNTVREIGYVHSDMGFDANSCAVLSAIGKQSPDINQGVDRADPLEQGAGDQGLMFGYATNETDVLMPAPITYAHRLVQRQAEVRKNGTLPWLRPDAKSQVTFQYDDGKIVGIDAVVLSTQHAEDIDQKSLQEAVMEEIIKPILPSEWLNTSTKFFINPTGRFVIGGPMGDCGLTGRKIIVDTYGGMARHGGGAFSGKDPSKVDRSAAYAARYVAKNIVAAGLADRCEIQVSYAIGVAEPTSIMVETFGTEKVPVEQLILLVREFFDLRPYGLIQMLDLLHPIYKETAAYGHFGRENFPWEKTDKAQLLRDAAGLK.

His15 is an ATP binding site. Mg(2+) is bound at residue Asp17. Glu43 provides a ligand contact to K(+). Glu56 and Gln99 together coordinate L-methionine. The flexible loop stretch occupies residues 99–109 (QSPDINQGVDR). Residues 164-166 (DAK), 230-231 (RF), Asp239, 245-246 (RK), Ala262, and Lys266 contribute to the ATP site. Asp239 contributes to the L-methionine binding site. Lys270 contacts L-methionine.

It belongs to the AdoMet synthase family. In terms of assembly, homotetramer; dimer of dimers. The cofactor is Mg(2+). It depends on K(+) as a cofactor.

Its subcellular location is the cytoplasm. It catalyses the reaction L-methionine + ATP + H2O = S-adenosyl-L-methionine + phosphate + diphosphate. The protein operates within amino-acid biosynthesis; S-adenosyl-L-methionine biosynthesis; S-adenosyl-L-methionine from L-methionine: step 1/1. Its function is as follows. Catalyzes the formation of S-adenosylmethionine (AdoMet) from methionine and ATP. The overall synthetic reaction is composed of two sequential steps, AdoMet formation and the subsequent tripolyphosphate hydrolysis which occurs prior to release of AdoMet from the enzyme. This chain is S-adenosylmethionine synthase, found in Salmonella heidelberg (strain SL476).